The sequence spans 685 residues: MQDIQLDKLLSADMSPENAQQVMQALSQSLNEHNIRYYVDDAPTITDSEYDRLMQCLIKLEAQFPQFIVADSPTQRVGGLALAKFDQITHLKPMLSLDNAFGEADFSAFHKRVTDKVGEVSFCCEPKLDGLAVSILYRHGVLERAATRGDGTVGEDITENVKTIKSIPLKLRGNDFPEVVEVRGEAFMPKAAFEALNERARAKDEKLFVNPRNAAAGSLRQLDSKITASRSLAFYAYALGVVEPDSYSLGKTHYEQLQQLKSWGLPVSNEIKVCDELDQVFDYYKDILTRRSDLPFEIDGVVMKVNDIAQQQRLGFVAKSPRWAIAYKFPAQEEMTLLEGVDFQVGRTGAVTPVARLKPVFVGGVTVSNATLHNADEIERLGIKIGDTVIIRRAGDVIPQIVAIVPERRPETATNIVFPHNCPVCGSLVERLEGEAVARCSGGLFCEAQRKEAIKHFASRKALDIDGMGDKVVEQLIDKELVQSPADLFKLTASMMTMLDRMGMKSATNLAAAIEAAKTTTLARFLYALGIREVGEATAANLAAHFASLDALRVATVEQLTAVEDVGVVVAQHVAHFFAQPHNLEVIDALIAAGVHWPAIEAPSADAQPLKGQTWVLTGTLNQLNRNDAKAQLQTLGAKVAGSVSKNTDCLVAGEAAGSKLAKAQELGVKVIDEEALLALFAANR.

NAD(+)-binding positions include 47-51 (DSEYD), 96-97 (SL), and glutamate 125. The active-site N6-AMP-lysine intermediate is the lysine 127. Residues arginine 148, glutamate 185, lysine 304, and lysine 328 each contribute to the NAD(+) site. Zn(2+) contacts are provided by cysteine 422, cysteine 425, cysteine 440, and cysteine 446. The 81-residue stretch at 605–685 (ADAQPLKGQT…ALLALFAANR (81 aa)) folds into the BRCT domain.

Belongs to the NAD-dependent DNA ligase family. LigA subfamily. Mg(2+) serves as cofactor. The cofactor is Mn(2+).

It carries out the reaction NAD(+) + (deoxyribonucleotide)n-3'-hydroxyl + 5'-phospho-(deoxyribonucleotide)m = (deoxyribonucleotide)n+m + AMP + beta-nicotinamide D-nucleotide.. DNA ligase that catalyzes the formation of phosphodiester linkages between 5'-phosphoryl and 3'-hydroxyl groups in double-stranded DNA using NAD as a coenzyme and as the energy source for the reaction. It is essential for DNA replication and repair of damaged DNA. This is DNA ligase from Shewanella putrefaciens (strain CN-32 / ATCC BAA-453).